The sequence spans 387 residues: WD repeat-containing protein 89 (387 aa).

WD repeat units follow at residues 21–65 (KEPT…VLRE), 68–107 (GYPG…EKPV), 112–156 (GYPS…QNLS), 168–208 (THSD…EEDA), 214–254 (NSIS…TDEP), and 319–358 (GHAA…KTFT).

The sequence is that of WD repeat-containing protein 89 (WDR89) from Homo sapiens (Human).